Here is a 642-residue protein sequence, read N- to C-terminus: Threonine--tRNA ligase (642 aa).

The region spanning 1–61 is the TGS domain; sequence MPVITLPDGS…ETDSELSIIT (61 aa). A catalytic region spans residues 243–534; the sequence is DHRKIGKQLD…LIEEYAGKFP (292 aa). Cys334, His385, and His511 together coordinate Zn(2+).

The protein belongs to the class-II aminoacyl-tRNA synthetase family. In terms of assembly, homodimer. Zn(2+) serves as cofactor.

The protein resides in the cytoplasm. It carries out the reaction tRNA(Thr) + L-threonine + ATP = L-threonyl-tRNA(Thr) + AMP + diphosphate + H(+). Functionally, catalyzes the attachment of threonine to tRNA(Thr) in a two-step reaction: L-threonine is first activated by ATP to form Thr-AMP and then transferred to the acceptor end of tRNA(Thr). Also edits incorrectly charged L-seryl-tRNA(Thr). This is Threonine--tRNA ligase from Shewanella halifaxensis (strain HAW-EB4).